Here is an 86-residue protein sequence, read N- to C-terminus: Long neurotoxin homolog (86 aa).

A signal peptide spans 1–21 (MKTLLLTLVVVTIVCLALGYT). 5 cysteine pairs are disulfide-bonded: C24/C45, C27/C32, C38/C63, C67/C78, and C79/C84.

It belongs to the three-finger toxin family. Ancestral subfamily. Orphan group II sub-subfamily. As to expression, expressed by the venom gland.

The protein localises to the secreted. Functionally, binds with low affinity and weakly inhibits muscle nicotinic acetylcholine receptor (nAChR). In Naja atra (Chinese cobra), this protein is Long neurotoxin homolog.